The primary structure comprises 562 residues: MKSFKLNRVRYQNIMSVGGNPIDIQLDKVQKTLITGKNGGGKSTMLEAITFGLFGKPFRDVKKGQIINSTNKKELLVELWMEFDDKKYFIKRGQKPNIFEISVDGVRLDESASSRDFQEEFERSIGMSYASFKQIVVLGTAGYTPFMALSTPARRKLVEDLLEVGTLAEMDKINKSQVRELNSQGQVLDAKKDGVIQQIKIYNENIERQKKLSGDNVARLQNMYDDLAKEARSLKAEIEEANERLLNIVLDEDPTEAFNKIGQEAFLIKSKIDSYNKVIKMYHDGGTCPTCASQLHQGDPIVSKITDKLHECNHSFEQLTCHRDNLSVLVDEYRANVKTKQDLASDIRTKKQAMIATIDKAKKVKAAIEQASAEFIDHADEIALLQKELDKIIKTKSDIVLEKYHRGIITDMLKDSGIKGAIIKKYVPLFNKQINHYLKIMEADYVFSIDEEFNESIKSRGREEFSYASFSQGEKARIDIALLFTWRDIAEKVSGVRINTLIMDEVMDSATDSEGIKAISTILNSLTDANVFIISHRDHDPQAYGQHLQMSKVGRFTVMTVS.

36 to 43 contributes to the ATP binding site; it reads GKNGGGKS.

To phage T5 protein D13 and to yeast RAD52. In terms of assembly, consists of two subunits: Gp47 and Gp46.

In terms of biological role, exonuclease involved in phage DNA recombination, replication, and repair. The protein is Exonuclease subunit 2 (46) of Escherichia phage RB69 (Bacteriophage RB69).